Reading from the N-terminus, the 370-residue chain is uncharacterized protein (370 aa).

The a divalent metal cation site is built by D152, H154, D184, N215, H306, and H308.

It belongs to the metallophosphoesterase superfamily. A divalent metal cation is required as a cofactor.

This is an uncharacterized protein from Helicobacter pylori (strain J99 / ATCC 700824) (Campylobacter pylori J99).